The chain runs to 183 residues: Adenine phosphoribosyltransferase (183 aa).

The protein belongs to the purine/pyrimidine phosphoribosyltransferase family. In terms of assembly, homodimer.

It localises to the cytoplasm. The catalysed reaction is AMP + diphosphate = 5-phospho-alpha-D-ribose 1-diphosphate + adenine. Its pathway is purine metabolism; AMP biosynthesis via salvage pathway; AMP from adenine: step 1/1. Functionally, catalyzes a salvage reaction resulting in the formation of AMP, that is energically less costly than de novo synthesis. The sequence is that of Adenine phosphoribosyltransferase from Escherichia fergusonii (strain ATCC 35469 / DSM 13698 / CCUG 18766 / IAM 14443 / JCM 21226 / LMG 7866 / NBRC 102419 / NCTC 12128 / CDC 0568-73).